We begin with the raw amino-acid sequence, 1145 residues long: Probable ATP-dependent RNA helicase DHX34 (1145 aa).

Over residues 1-14 (MPPPRTREGRGHRD) the composition is skewed to basic and acidic residues. The tract at residues 1–27 (MPPPRTREGRGHRDRDHHRAPREEEAP) is disordered. Residues 174 to 334 (LQTLKEHQVV…FSHAPVVQVP (161 aa)) enclose the Helicase ATP-binding domain. 187 to 194 (GDTGCGKS) serves as a coordination point for ATP. Residues 281–284 (DEVH) carry the DEAH box motif. Residues 370–538 (AIDNKYPPEE…ALVLQMKSMS (169 aa)) enclose the Helicase C-terminal domain. 2 disordered regions span residues 726 to 764 (LKRQHEEGGGRRRKVLRLQEDGCSSDEEDRKGSTSQRAD) and 1091 to 1114 (NTCPEAPGDDPGSEEAAPAPPQKT). Residues S749 and S750 each carry the phosphoserine modification.

Belongs to the DEAD box helicase family. DEAH subfamily. In terms of assembly, forms a complex with RUVBL1 and RUVBL2. Part of a complex composed of SMG1, DHX34 and UPF1; within the complex DHX34 acts as a scaffolding protein to facilitate SMG1 phosphorylation of UPF1. Interacts with UPF1, MOV10, EIF4A3, XRN2, SMG6, SMG7, SMG9, UPF3A, UPF3B, CASC3/MLN51, XRN1, DIS3 and DCP1A; the interactions are RNA-independent. Interacts with NCBP1/CPB80; the interaction is RNA-dependent. Interacts (via C-terminus) with SMG1; the interaction is RNA-independent.

It catalyses the reaction ATP + H2O = ADP + phosphate + H(+). In terms of biological role, probable ATP-binding RNA helicase. Required for nonsense-mediated decay (NMD) degradation of mRNA transcripts containing premature stop codons. Promotes the phosphorylation of UPF1 along with its interaction with key NMD pathway proteins UPF2 and EIF4A3. Negatively regulates the nucleotide binding ability and ATP hydrolysis of the RUVBL1-RUVBL2 complex via induction of N-terminus conformation changes of the RUVBL2 subunits. This is Probable ATP-dependent RNA helicase DHX34 from Mus musculus (Mouse).